A 145-amino-acid chain; its full sequence is Hemoglobin subunit beta-2 (145 aa).

The region spanning 2-145 (HLTAEDRKEI…GVSHALGHGY (144 aa)) is the Globin domain. Positions 63 and 92 each coordinate heme b.

This sequence belongs to the globin family. Minor hemoglobin is a tetramer of two alpha-2 chains and two beta-2 chains. As to expression, red blood cells.

Involved in oxygen transport from the lung to the various peripheral tissues. The chain is Hemoglobin subunit beta-2 (HBB2) from Triturus cristatus (Great crested newt).